The chain runs to 157 residues: Cell cycle regulator of non-homologous end joining (157 aa).

M1 carries the post-translational modification N-acetylmethionine. Residues 1-21 (METLQSETKTRVLPSWLTAQV) carry the KBM motif. The disordered stretch occupies residues 77–147 (KACEQPALAG…SPEEEEEEDV (71 aa)). Positions 98–107 (VSPHTSSGSS) are enriched in low complexity. A compositionally biased stretch (polar residues) spans 123–136 (SPSQRPGGSSSACS). The XLM motif lies at 147–157 (VLKYVREIFFS).

Interacts (via KBM motif) with XRCC5/Ku80 and XRCC6/Ku70 heterodimer. Interacts (via XLF motif) with TRIM28/KAP1, ATM, MRE11, NBN and RAD50. Interacts with splicing factor SF3B1. Interacts with ERCC6L2; this interaction is DNA independent. As to quaternary structure, does not interact with XRCC5/Ku80 and XRCC6/Ku70 heterodimer. In terms of assembly, interacts (via KBM motif) with XRCC5/Ku80 and XRCC6/Ku70 heterodimer.

It is found in the cytoplasm. The protein localises to the nucleus. The protein resides in the chromosome. Functionally, cell-cycle-specific regulator of classical non-homologous end joining (NHEJ) of DNA double-strand break (DSB) repair, which can act both as an activator or inhibitor of NHEJ, depending on the cell cycle phase. Acts as a regulator of DNA repair pathway choice by specifically inhibiting classical NHEJ during the S and G2 phases, thereby promoting error-free repair by homologous recombination during cell cycle phases when sister chromatids are present. Preferentially protects single-stranded overhangs at break sites by inhibiting classical NHEJ, thereby creating a local environment that favors homologous recombination. Acts via interaction with XRCC5/Ku80 and XRCC6/Ku70. In contrast, acts as an activator of NHEJ during G1 phase of the cell cycle: promotes classical NHEJ in G1 phase cells via multivalent interactions that increase the affinity of DNA damage response proteins for DSB-associated chromatin. Also involved in immunoglobulin V(D)J recombination. May also act as an indirect regulator of proteasome. The chain is Cell cycle regulator of non-homologous end joining from Homo sapiens (Human).